A 270-amino-acid polypeptide reads, in one-letter code: Small ribosomal subunit protein eS1 (270 aa).

The tract at residues 235-270 (GTSKGGAASTAAVAKGEEGVKVDRPEGYEPPVLETV) is disordered. A compositionally biased stretch (low complexity) spans 239-248 (GGAASTAAVA). Residues 249 to 261 (KGEEGVKVDRPEG) show a composition bias toward basic and acidic residues.

This sequence belongs to the eukaryotic ribosomal protein eS1 family. In terms of assembly, component of the small ribosomal subunit. Mature ribosomes consist of a small (40S) and a large (60S) subunit. The 40S subunit contains about 33 different proteins and 1 molecule of RNA (18S). The 60S subunit contains about 49 different proteins and 3 molecules of RNA (28S, 5.8S and 5S).

Its subcellular location is the cytoplasm. The polypeptide is Small ribosomal subunit protein eS1 (Ixodes scapularis (Black-legged tick)).